A 76-amino-acid polypeptide reads, in one-letter code: Conotoxin Bu28 (76 aa).

An N-terminal signal peptide occupies residues 1-24 (MTSVQSATCCCLLWLVLCVQLVTP). The propeptide occupies 25–39 (DSPATAQLSRHLTAR). Cystine bridges form between cysteine 50–cysteine 63 and cysteine 54–cysteine 65. Arginine 69 bears the Arginine amide mark. Residues 71 to 76 (VVSSSI) constitute a propeptide that is removed on maturation.

It belongs to the conotoxin J superfamily. Expressed by the venom duct.

The protein localises to the secreted. Its function is as follows. Highly inhibits both nicotinic acetylcholine receptors (neuronal (alpha-3/beta-4) and muscular (alpha-1/beta-1/epsilon/delta) subtypes) and the voltage-gated potassium channel Kv1.6/KCNA6 subtype. This is Conotoxin Bu28 from Conus bullatus (Bubble cone).